Here is a 512-residue protein sequence, read N- to C-terminus: Glutamyl-tRNA(Gln) amidotransferase subunit A (512 aa).

Catalysis depends on charge relay system residues Lys-82 and Ser-157. Catalysis depends on Ser-181, which acts as the Acyl-ester intermediate.

The protein belongs to the amidase family. GatA subfamily. In terms of assembly, heterotrimer of A, B and C subunits.

The enzyme catalyses L-glutamyl-tRNA(Gln) + L-glutamine + ATP + H2O = L-glutaminyl-tRNA(Gln) + L-glutamate + ADP + phosphate + H(+). Its function is as follows. Allows the formation of correctly charged Gln-tRNA(Gln) through the transamidation of misacylated Glu-tRNA(Gln) in organisms which lack glutaminyl-tRNA synthetase. The reaction takes place in the presence of glutamine and ATP through an activated gamma-phospho-Glu-tRNA(Gln). The sequence is that of Glutamyl-tRNA(Gln) amidotransferase subunit A from Bordetella pertussis (strain Tohama I / ATCC BAA-589 / NCTC 13251).